The primary structure comprises 181 residues: Glucose-1-phosphate adenylyltransferase large subunit 2 (181 aa).

Belongs to the bacterial/plant glucose-1-phosphate adenylyltransferase family. In terms of assembly, heterotetramer. As to expression, leaves.

It is found in the plastid. It localises to the chloroplast. Its subcellular location is the amyloplast. The enzyme catalyses alpha-D-glucose 1-phosphate + ATP + H(+) = ADP-alpha-D-glucose + diphosphate. The protein operates within glycan biosynthesis; starch biosynthesis. Highly active without 3'phosphoglycerate, and is only slightly affected by the activator 3'phosphoglycerate and inhibitor orthophosphate. In terms of biological role, this protein plays a role in synthesis of starch. It catalyzes the synthesis of the activated glycosyl donor, ADP-glucose from Glc-1-P and ATP. In Hordeum vulgare (Barley), this protein is Glucose-1-phosphate adenylyltransferase large subunit 2.